A 307-amino-acid chain; its full sequence is Dihydroorotate dehydrogenase A (fumarate) (307 aa).

Residues S21 and 46-47 (KT) each bind FMN. Substrate-binding positions include K46, 70–74 (NSVGL), and N130. Residue N130 participates in FMN binding. Residue C133 is the Nucleophile of the active site. Residues K168 and I194 each contribute to the FMN site. 195 to 196 (NT) contacts substrate. FMN is bound by residues G220, 246–247 (GG), and 268–269 (GS).

This sequence belongs to the dihydroorotate dehydrogenase family. Type 1 subfamily. Homodimer. FMN serves as cofactor.

It is found in the cytoplasm. It carries out the reaction (S)-dihydroorotate + fumarate = orotate + succinate. The protein operates within pyrimidine metabolism; UMP biosynthesis via de novo pathway. Catalyzes the conversion of dihydroorotate to orotate with fumarate as the electron acceptor. In Lactobacillus delbrueckii subsp. bulgaricus (strain ATCC 11842 / DSM 20081 / BCRC 10696 / JCM 1002 / NBRC 13953 / NCIMB 11778 / NCTC 12712 / WDCM 00102 / Lb 14), this protein is Dihydroorotate dehydrogenase A (fumarate) (pyrD).